The primary structure comprises 390 residues: Enoyl-[acyl-carrier-protein] reductase [NADH], chloroplastic (390 aa).

Residues 1–74 (MAATAASSLQ…CKRPFSFSTR (74 aa)) constitute a chloroplast transit peptide. The NADP(+) site is built by L53 and N170. S239 functions as the Proton donor in the catalytic mechanism. Residues K282 and S314 each contribute to the NADP(+) site. K282 functions as the Lowers pKa of active site Tyr in the catalytic mechanism.

The protein belongs to the short-chain dehydrogenases/reductases (SDR) family. FabI subfamily. As to quaternary structure, homotetramer. As to expression, expressed in flowers and siliques and at lower levels in roots and leaves (at protein level).

The protein resides in the plastid. It localises to the chloroplast. The catalysed reaction is a 2,3-saturated acyl-[ACP] + NAD(+) = a (2E)-enoyl-[ACP] + NADH + H(+). Its pathway is lipid metabolism; fatty acid biosynthesis. Its activity is regulated as follows. Inhibited by the phytotoxin cyperin and the synthetic antimicrobial compound triclosan. Its function is as follows. Catalyzes the NAD-dependent reduction of a carbon-carbon double bond in an enoyl moiety that is covalently linked to an acyl carrier protein (ACP). Catalyzes the last reduction step in the de novo synthesis cycle of fatty acids. Involved in the elongation cycle of fatty acids which are used in lipid metabolism. Required for normal plant growth. The sequence is that of Enoyl-[acyl-carrier-protein] reductase [NADH], chloroplastic (MOD1) from Arabidopsis thaliana (Mouse-ear cress).